A 151-amino-acid chain; its full sequence is D-aminoacyl-tRNA deacylase (151 aa).

The Gly-cisPro motif, important for rejection of L-amino acids signature appears at 136–137; it reads GP.

It belongs to the DTD family. As to quaternary structure, homodimer.

It localises to the cytoplasm. The catalysed reaction is glycyl-tRNA(Ala) + H2O = tRNA(Ala) + glycine + H(+). It carries out the reaction a D-aminoacyl-tRNA + H2O = a tRNA + a D-alpha-amino acid + H(+). Functionally, an aminoacyl-tRNA editing enzyme that deacylates mischarged D-aminoacyl-tRNAs. Also deacylates mischarged glycyl-tRNA(Ala), protecting cells against glycine mischarging by AlaRS. Acts via tRNA-based rather than protein-based catalysis; rejects L-amino acids rather than detecting D-amino acids in the active site. By recycling D-aminoacyl-tRNA to D-amino acids and free tRNA molecules, this enzyme counteracts the toxicity associated with the formation of D-aminoacyl-tRNA entities in vivo and helps enforce protein L-homochirality. The polypeptide is D-aminoacyl-tRNA deacylase (Lactococcus lactis subsp. cremoris (strain MG1363)).